Reading from the N-terminus, the 456-residue chain is PTS system sucrose-specific EIIBC component (456 aa).

A PTS EIIB type-1 domain is found at 4–87 (EQISCSLLPL…TQAAGISESS (84 aa)). The active-site Phosphocysteine intermediate; for EIIB activity is the Cys-26. Residues 107–456 (RLLSNIFVPI…LVLKYKTDAE (350 aa)) enclose the PTS EIIC type-1 domain. The next 10 membrane-spanning stretches (helical) occupy residues 112–132 (IFVP…LLGM), 144–164 (AIYI…PILI), 181–201 (TLGG…AAGF), 213–233 (MIGY…MSIV), 247–267 (LILT…LIIG), 288–308 (AGWL…ITGI), 329–349 (FLLP…LAVW), 360–380 (ITLP…IFGI), 388–408 (FIAA…VHVY), and 428–448 (LLNY…VSLV).

It localises to the cell inner membrane. The catalysed reaction is N(pros)-phospho-L-histidyl-[protein](out) + sucrose = sucrose 6(G)-phosphate(in) + L-histidyl-[protein]. Its function is as follows. The phosphoenolpyruvate-dependent sugar phosphotransferase system (sugar PTS), a major carbohydrate active transport system, catalyzes the phosphorylation of incoming sugar substrates concomitantly with their translocation across the cell membrane. This system is involved in sucrose transport. In Salmonella typhimurium, this protein is PTS system sucrose-specific EIIBC component.